The chain runs to 267 residues: Phosphatidylserine decarboxylase proenzyme (267 aa).

Residues Asp78, His132, and Ser236 each act as charge relay system; for autoendoproteolytic cleavage activity in the active site. The Schiff-base intermediate with substrate; via pyruvic acid; for decarboxylase activity role is filled by Ser236. The residue at position 236 (Ser236) is a Pyruvic acid (Ser); by autocatalysis.

Belongs to the phosphatidylserine decarboxylase family. PSD-B subfamily. Prokaryotic type I sub-subfamily. Heterodimer of a large membrane-associated beta subunit and a small pyruvoyl-containing alpha subunit. The cofactor is pyruvate. Is synthesized initially as an inactive proenzyme. Formation of the active enzyme involves a self-maturation process in which the active site pyruvoyl group is generated from an internal serine residue via an autocatalytic post-translational modification. Two non-identical subunits are generated from the proenzyme in this reaction, and the pyruvate is formed at the N-terminus of the alpha chain, which is derived from the carboxyl end of the proenzyme. The autoendoproteolytic cleavage occurs by a canonical serine protease mechanism, in which the side chain hydroxyl group of the serine supplies its oxygen atom to form the C-terminus of the beta chain, while the remainder of the serine residue undergoes an oxidative deamination to produce ammonia and the pyruvoyl prosthetic group on the alpha chain. During this reaction, the Ser that is part of the protease active site of the proenzyme becomes the pyruvoyl prosthetic group, which constitutes an essential element of the active site of the mature decarboxylase.

The protein resides in the cell membrane. The enzyme catalyses a 1,2-diacyl-sn-glycero-3-phospho-L-serine + H(+) = a 1,2-diacyl-sn-glycero-3-phosphoethanolamine + CO2. It participates in phospholipid metabolism; phosphatidylethanolamine biosynthesis; phosphatidylethanolamine from CDP-diacylglycerol: step 2/2. Functionally, catalyzes the formation of phosphatidylethanolamine (PtdEtn) from phosphatidylserine (PtdSer). The chain is Phosphatidylserine decarboxylase proenzyme from Helicobacter pylori (strain Shi470).